The sequence spans 883 residues: Bifunctional heparan sulfate N-deacetylase/N-sulfotransferase 2 (883 aa).

The Cytoplasmic segment spans residues 1-18 (MLQLWKVVRPARQLELHR). The helical; Signal-anchor for type II membrane protein transmembrane segment at 19-39 (LILLLIAFSLGSMGFLAYYVS) threads the bilayer. The Lumenal portion of the chain corresponds to 40-883 (TSPKAKEPLP…REELQHSSLG (844 aa)). The tract at residues 41-597 (SPKAKEPLPL…KRHKDIWSKE (557 aa)) is heparan sulfate N-deacetylase 2. Residues 49–81 (PLPLGDCSSGGAAGPGPARPPVPPRPPRPPETA) are disordered. The segment covering 65–78 (PARPPVPPRPPRPP) has biased composition (pro residues). N-linked (GlcNAc...) asparagine glycosylation is found at N233, N350, and N400. A heparan sulfate N-sulfotransferase 2 region spans residues 598–883 (KTCDRLPKFL…REELQHSSLG (286 aa)). The For sulfotransferase activity role is filled by K613. 613–617 (KTGTT) lines the 3'-phosphoadenylyl sulfate pocket. A glycan (N-linked (GlcNAc...) asparagine) is linked at N666. S711 contacts 3'-phosphoadenylyl sulfate. Residues N726 and N802 are each glycosylated (N-linked (GlcNAc...) asparagine). C817 and C827 are oxidised to a cystine. 3'-phosphoadenylyl sulfate is bound at residue 832-836 (KGRRY).

The protein belongs to the sulfotransferase 1 family. NDST subfamily. As to quaternary structure, monomer.

The protein resides in the golgi apparatus membrane. The enzyme catalyses alpha-D-glucosaminyl-[heparan sulfate](n) + 3'-phosphoadenylyl sulfate = N-sulfo-alpha-D-glucosaminyl-[heparan sulfate](n) + adenosine 3',5'-bisphosphate + 2 H(+). It functions in the pathway glycan metabolism; heparan sulfate biosynthesis. It participates in glycan metabolism; heparin biosynthesis. Functionally, essential bifunctional enzyme that catalyzes both the N-deacetylation and the N-sulfation of glucosamine (GlcNAc) of the glycosaminoglycan in heparan sulfate. Modifies the GlcNAc-GlcA disaccharide repeating sugar backbone to make N-sulfated heparosan, a prerequisite substrate for later modifications in heparin biosynthesis. Plays a role in determining the extent and pattern of sulfation of heparan sulfate. Required for the exosomal release of SDCBP, CD63 and syndecan. This chain is Bifunctional heparan sulfate N-deacetylase/N-sulfotransferase 2 (NDST2), found in Homo sapiens (Human).